Consider the following 348-residue polypeptide: tRNA N6-adenosine threonylcarbamoyltransferase (348 aa).

Fe cation contacts are provided by His116 and His120. Residues 138-142 (IISGG), Asp171, Gly184, and Asn282 each bind substrate. Asp310 contacts Fe cation.

This sequence belongs to the KAE1 / TsaD family. Requires Fe(2+) as cofactor.

It localises to the cytoplasm. It catalyses the reaction L-threonylcarbamoyladenylate + adenosine(37) in tRNA = N(6)-L-threonylcarbamoyladenosine(37) in tRNA + AMP + H(+). Required for the formation of a threonylcarbamoyl group on adenosine at position 37 (t(6)A37) in tRNAs that read codons beginning with adenine. Is involved in the transfer of the threonylcarbamoyl moiety of threonylcarbamoyl-AMP (TC-AMP) to the N6 group of A37, together with TsaE and TsaB. TsaD likely plays a direct catalytic role in this reaction. This Ehrlichia ruminantium (strain Welgevonden) protein is tRNA N6-adenosine threonylcarbamoyltransferase.